The sequence spans 287 residues: Immunoglobulin alpha Fc receptor (287 aa).

Residues 1–21 (MDPKQTTLLCLVLCLGQRIQA) form the signal peptide. Residues 22 to 227 (QEGDFPMPFI…SIHQDYTTQN (206 aa)) are Extracellular-facing. Ig-like C2-type domains are found at residues 42–107 (DGSV…IGHY) and 139–200 (GENI…YNRS). Residues Cys-49 and Cys-100 are joined by a disulfide bond. Asn-65, Asn-79, Asn-141, Asn-177, and Asn-186 each carry an N-linked (GlcNAc...) asparagine glycan. Residues Cys-146 and Cys-193 are joined by a disulfide bond. Residues 228–246 (LIRMAVAGLVLVALLAILV) traverse the membrane as a helical segment. The Cytoplasmic portion of the chain corresponds to 247–287 (ENWHSHTALNKEASADVAEPSWSQQMCQPGLTFARTPSVCK).

As to quaternary structure, associates with the Fc epsilon RI gamma 2 receptor inducing tyrosine phosphorylation of gamma 2. In terms of assembly, (Microbial infection) Interacts with Staphylococcus aureus protein SSL11. As to expression, isoform A.1, isoform A.2 and isoform A.3 are differentially expressed between blood and mucosal myeloid cells. Isoform A.1, isoform A.2 and isoform A.3 are expressed in monocytes. Isoform A.1 and isoform A.2 are expressed in alveolar macrophages; however only one isoform is expressed at alveolar macrophages surfaces.

The protein localises to the cell membrane. Its subcellular location is the secreted. In terms of biological role, binds to the Fc region of immunoglobulins alpha. Mediates several functions including cytokine production. The polypeptide is Immunoglobulin alpha Fc receptor (FCAR) (Homo sapiens (Human)).